The chain runs to 347 residues: Probable 3-hydroxyisobutyrate dehydrogenase, mitochondrial (347 aa).

The N-terminal 34 residues, 1–34, are a transit peptide targeting the mitochondrion; the sequence is MAIRRAQTLLCLSKFKTNFVSGSLHRFSSSSQNS. Residues 38 to 67, 101 to 102, and T134 each bind NAD(+); these read QNVG…TVHD and LP. K219 is an active-site residue. Position 294 (K294) interacts with NAD(+).

It belongs to the HIBADH-related family. 3-hydroxyisobutyrate dehydrogenase subfamily.

Its subcellular location is the mitochondrion. It carries out the reaction 3-hydroxy-2-methylpropanoate + NAD(+) = 2-methyl-3-oxopropanoate + NADH + H(+). It functions in the pathway amino-acid degradation; L-valine degradation. This Arabidopsis thaliana (Mouse-ear cress) protein is Probable 3-hydroxyisobutyrate dehydrogenase, mitochondrial.